A 127-amino-acid chain; its full sequence is Small ribosomal subunit protein uS11 (127 aa).

It belongs to the universal ribosomal protein uS11 family. In terms of assembly, part of the 30S ribosomal subunit. Interacts with proteins S7 and S18. Binds to IF-3.

Functionally, located on the platform of the 30S subunit, it bridges several disparate RNA helices of the 16S rRNA. Forms part of the Shine-Dalgarno cleft in the 70S ribosome. The protein is Small ribosomal subunit protein uS11 of Chlorobaculum parvum (strain DSM 263 / NCIMB 8327) (Chlorobium vibrioforme subsp. thiosulfatophilum).